Here is a 444-residue protein sequence, read N- to C-terminus: C4-dicarboxylate transport protein (444 aa).

Transmembrane regions (helical) follow at residues 7–29 (LYKS…GHFY), 44–66 (IKLI…IAGM), 79–101 (ALLY…VNVV), 143–165 (IVGA…FGFA), 186–208 (VMFN…AMAF), 221–243 (LGQL…LGAI), 291–313 (VVGL…YLTM), and 353–375 (FIVL…ALIL). The segment at 418 to 444 (SGGRAISDTREEDDLGVAEGPTPTTVK) is disordered.

The protein belongs to the dicarboxylate/amino acid:cation symporter (DAACS) (TC 2.A.23) family.

Its subcellular location is the cell inner membrane. In terms of biological role, responsible for the transport of dicarboxylates such as succinate, fumarate, and malate from the periplasm across the inner membrane. This is C4-dicarboxylate transport protein from Pseudomonas chlororaphis (Pseudomonas aureofaciens).